The sequence spans 233 residues: Pirin-like protein YhaK (233 aa).

Belongs to the pirin family. As to quaternary structure, monomer.

The protein resides in the cytoplasm. Functionally, does not have quercetin 2,3-dioxygenase activity. This chain is Pirin-like protein YhaK (yhaK), found in Escherichia coli O157:H7.